Consider the following 314-residue polypeptide: Ribosomal RNA small subunit methyltransferase H (314 aa).

S-adenosyl-L-methionine contacts are provided by residues 34–36 (GGH), Asp54, Phe83, Asp104, and Gln111.

Belongs to the methyltransferase superfamily. RsmH family.

The protein localises to the cytoplasm. The enzyme catalyses cytidine(1402) in 16S rRNA + S-adenosyl-L-methionine = N(4)-methylcytidine(1402) in 16S rRNA + S-adenosyl-L-homocysteine + H(+). In terms of biological role, specifically methylates the N4 position of cytidine in position 1402 (C1402) of 16S rRNA. In Ligilactobacillus salivarius (strain UCC118) (Lactobacillus salivarius), this protein is Ribosomal RNA small subunit methyltransferase H.